Here is a 401-residue protein sequence, read N- to C-terminus: GRIP domain-containing protein C119.12 (401 aa).

The stretch at 7–296 (NETKLVENEN…TLLIGKLQHE (290 aa)) forms a coiled coil. A GRIP domain is found at 315–366 (NNAEKIDKQLISNLFVSFLTLPRADTKRFEILQLISSVLDWNDTQREQTGLQ).

Its subcellular location is the golgi apparatus lumen. The sequence is that of GRIP domain-containing protein C119.12 from Schizosaccharomyces pombe (strain 972 / ATCC 24843) (Fission yeast).